Here is a 137-residue protein sequence, read N- to C-terminus: Nucleoside diphosphate kinase (137 aa).

ATP-binding residues include Lys9, Phe57, Arg85, Thr91, Arg102, and Asn112. His115 serves as the catalytic Pros-phosphohistidine intermediate.

It belongs to the NDK family. Homotetramer. Mg(2+) is required as a cofactor.

The protein resides in the cytoplasm. It carries out the reaction a 2'-deoxyribonucleoside 5'-diphosphate + ATP = a 2'-deoxyribonucleoside 5'-triphosphate + ADP. It catalyses the reaction a ribonucleoside 5'-diphosphate + ATP = a ribonucleoside 5'-triphosphate + ADP. Functionally, major role in the synthesis of nucleoside triphosphates other than ATP. The ATP gamma phosphate is transferred to the NDP beta phosphate via a ping-pong mechanism, using a phosphorylated active-site intermediate. This chain is Nucleoside diphosphate kinase, found in Citrifermentans bemidjiense (strain ATCC BAA-1014 / DSM 16622 / JCM 12645 / Bem) (Geobacter bemidjiensis).